A 275-amino-acid chain; its full sequence is Secreted RxLR effector protein 153 (275 aa).

The first 27 residues, 1-27 (MRNRAFLFGLFFIEYACLVLFAAPTRA), serve as a signal peptide directing secretion. Asparagine 45 carries an N-linked (GlcNAc...) asparagine glycan. The short motif at 48-63 (RTLQADDSKRISAEER) is the RxLR-dEER element.

The protein belongs to the RxLR effector family.

The protein resides in the secreted. It is found in the host cell membrane. In terms of biological role, secreted effector that completely suppresses the host cell death induced by cell death-inducing proteins. The polypeptide is Secreted RxLR effector protein 153 (Plasmopara viticola (Downy mildew of grapevine)).